A 635-amino-acid polypeptide reads, in one-letter code: MIAITLPDGSRREFPGPVTVAEVAQGIGAGLAKAALAGKVDGQLVDTSYRIDRDAELAIVTDKDADGVDVIRHSTAHLLAYAVKELYPEAQVTIGPVIENGFYYDFAYKRPFTPEDLAAIEKKMTELARKDEKVVREVWNRDEAVALFESMGEKYKAEIIASIPADQEIGLYREGSFVDLCRGPHVPSTGKLKVFKLMKVAGAYWRGDANNEMLQRIYGTAWARKEDQEAYLHMLEEAEKRDHRKLGKTLDLFHLQEEAPGMVFWHPKGWQVWQAVEQYMRGRLTDAGYDEVRTPQVMDRSLWEKSGHWQNYKENMFVTESEKRDYAIKPMNCPGHVQIFNHGLRSYRDLPLRLAEFGACHRNEPSGALHGLMRVRGFVQDDAHIFCTEEQIVAEAKAFNELAFSVYDDFGFKDVKVKLSLRPDQRAGSDEIWDHAEEGLRLALRACGVDWEELPGEGAFYGPKVEYHIKDAIGRSWQCGTLQLDLVLPERLDAEYVSEDNSRKRPVMLHRAILGSFERFLGILLENHAGALPAWLAPEQVVVMNIADSQAEYAESVVQLLQKQGFRAKADLRNEKITYKIREHSLQKVPYLLVVGDKERDASQVAVRARGNVDLGVMPVSAFVERLKNDVASKA.

The 61-residue stretch at 1–61 folds into the TGS domain; it reads MIAITLPDGS…DRDAELAIVT (61 aa). Residues 242-533 are catalytic; sequence DHRKLGKTLD…LLENHAGALP (292 aa). Residues cysteine 333, histidine 384, and histidine 510 each contribute to the Zn(2+) site.

It belongs to the class-II aminoacyl-tRNA synthetase family. In terms of assembly, homodimer. Requires Zn(2+) as cofactor.

It localises to the cytoplasm. It catalyses the reaction tRNA(Thr) + L-threonine + ATP = L-threonyl-tRNA(Thr) + AMP + diphosphate + H(+). Functionally, catalyzes the attachment of threonine to tRNA(Thr) in a two-step reaction: L-threonine is first activated by ATP to form Thr-AMP and then transferred to the acceptor end of tRNA(Thr). Also edits incorrectly charged L-seryl-tRNA(Thr). The protein is Threonine--tRNA ligase of Cupriavidus necator (strain ATCC 17699 / DSM 428 / KCTC 22496 / NCIMB 10442 / H16 / Stanier 337) (Ralstonia eutropha).